The sequence spans 960 residues: Serine/threonine-protein kinase atg1 (960 aa).

The Protein kinase domain maps to 22-327; it reads YTRLDEIGRG…FPEFFSNNVI (306 aa). ATP contacts are provided by residues 28–36 and lysine 51; that span reads IGRGSFATV. Catalysis depends on aspartate 165, which acts as the Proton acceptor. Disordered regions lie at residues 333–467, 503–538, 550–571, 673–694, 789–815, and 926–960; these read GLLA…RAQE, PRLQ…PHAN, ARAD…QSPT, SAST…SADS, RLPP…TADV, and AKRS…TPPR. 2 stretches are compositionally biased toward polar residues: residues 376-388 and 520-536; these read PVTT…TPPT and RRTT…SSPH. The segment covering 550–566 has biased composition (basic and acidic residues); the sequence is ARADSTHQRQHSYERRY. Residues 789 to 800 show a composition bias toward basic and acidic residues; it reads RLPPDHPSHPDN. Low complexity predominate over residues 801 to 815; the sequence is HSISSTAGSSSTADV. The segment covering 930–951 has biased composition (polar residues); that stretch reads SAPTPTAGSAGKTPTSNISPVT.

It belongs to the protein kinase superfamily. Ser/Thr protein kinase family. APG1/unc-51/ULK1 subfamily. In terms of assembly, homodimer. Forms a ternary complex with ATG13 and ATG17.

It localises to the cytoplasm. The protein localises to the preautophagosomal structure membrane. The catalysed reaction is L-seryl-[protein] + ATP = O-phospho-L-seryl-[protein] + ADP + H(+). The enzyme catalyses L-threonyl-[protein] + ATP = O-phospho-L-threonyl-[protein] + ADP + H(+). Serine/threonine protein kinase involved in the cytoplasm to vacuole transport (Cvt) and found to be essential in autophagy, where it is required for the formation of autophagosomes. Involved in the clearance of protein aggregates which cannot be efficiently cleared by the proteasome. Required for selective autophagic degradation of the nucleus (nucleophagy) as well as for mitophagy which contributes to regulate mitochondrial quantity and quality by eliminating the mitochondria to a basal level to fulfill cellular energy requirements and preventing excess ROS production. Also involved in endoplasmic reticulum-specific autophagic process, in selective removal of ER-associated degradation (ERAD) substrates. Plays a key role in ATG9 and ATG23 cycling through the pre-autophagosomal structure and is necessary to promote ATG18 binding to ATG9 through phosphorylation of ATG9. Catalyzes phosphorylation of ATG4, decreasing the interaction between ATG4 and ATG8 and impairing deconjugation of PE-conjugated forms of ATG8. The sequence is that of Serine/threonine-protein kinase atg1 from Penicillium rubens (strain ATCC 28089 / DSM 1075 / NRRL 1951 / Wisconsin 54-1255) (Penicillium chrysogenum).